The chain runs to 121 residues: Small ribosomal subunit protein uS13 (121 aa).

The disordered stretch occupies residues 93-121 (RGLPVRGQNTKNNARTRKGKATAIAGKKK). Residues 106–121 (ARTRKGKATAIAGKKK) are compositionally biased toward basic residues.

The protein belongs to the universal ribosomal protein uS13 family. In terms of assembly, part of the 30S ribosomal subunit. Forms a loose heterodimer with protein S19. Forms two bridges to the 50S subunit in the 70S ribosome.

Its function is as follows. Located at the top of the head of the 30S subunit, it contacts several helices of the 16S rRNA. In the 70S ribosome it contacts the 23S rRNA (bridge B1a) and protein L5 of the 50S subunit (bridge B1b), connecting the 2 subunits; these bridges are implicated in subunit movement. Contacts the tRNAs in the A and P-sites. The polypeptide is Small ribosomal subunit protein uS13 (Streptococcus uberis (strain ATCC BAA-854 / 0140J)).